Reading from the N-terminus, the 168-residue chain is Peptide deformylase 1 (168 aa).

Cysteine 91 and histidine 133 together coordinate Fe cation. Glutamate 134 is a catalytic residue. Residue histidine 137 participates in Fe cation binding.

Belongs to the polypeptide deformylase family. It depends on Fe(2+) as a cofactor.

It catalyses the reaction N-terminal N-formyl-L-methionyl-[peptide] + H2O = N-terminal L-methionyl-[peptide] + formate. Removes the formyl group from the N-terminal Met of newly synthesized proteins. Requires at least a dipeptide for an efficient rate of reaction. N-terminal L-methionine is a prerequisite for activity but the enzyme has broad specificity at other positions. The polypeptide is Peptide deformylase 1 (Shewanella oneidensis (strain ATCC 700550 / JCM 31522 / CIP 106686 / LMG 19005 / NCIMB 14063 / MR-1)).